A 179-amino-acid chain; its full sequence is Large ribosomal subunit protein uL10 (179 aa).

Belongs to the universal ribosomal protein uL10 family. As to quaternary structure, part of the ribosomal stalk of the 50S ribosomal subunit. The N-terminus interacts with L11 and the large rRNA to form the base of the stalk. The C-terminus forms an elongated spine to which L12 dimers bind in a sequential fashion forming a multimeric L10(L12)X complex.

In terms of biological role, forms part of the ribosomal stalk, playing a central role in the interaction of the ribosome with GTP-bound translation factors. The chain is Large ribosomal subunit protein uL10 from Thermotoga petrophila (strain ATCC BAA-488 / DSM 13995 / JCM 10881 / RKU-1).